A 144-amino-acid chain; its full sequence is Putative pre-16S rRNA nuclease (144 aa).

Belongs to the YqgF nuclease family.

Its subcellular location is the cytoplasm. In terms of biological role, could be a nuclease involved in processing of the 5'-end of pre-16S rRNA. This chain is Putative pre-16S rRNA nuclease, found in Mycoplasma mobile (strain ATCC 43663 / 163K / NCTC 11711) (Mesomycoplasma mobile).